We begin with the raw amino-acid sequence, 115 residues long: Peptidyl-tRNA hydrolase (115 aa).

Belongs to the PTH2 family.

Its subcellular location is the cytoplasm. The catalysed reaction is an N-acyl-L-alpha-aminoacyl-tRNA + H2O = an N-acyl-L-amino acid + a tRNA + H(+). In terms of biological role, the natural substrate for this enzyme may be peptidyl-tRNAs which drop off the ribosome during protein synthesis. The polypeptide is Peptidyl-tRNA hydrolase (Archaeoglobus fulgidus (strain ATCC 49558 / DSM 4304 / JCM 9628 / NBRC 100126 / VC-16)).